Reading from the N-terminus, the 625-residue chain is 1-deoxy-D-xylulose-5-phosphate synthase 1 (625 aa).

Thiamine diphosphate-binding positions include H74 and 115 to 117 (GHT). Mg(2+) is bound at residue D146. Thiamine diphosphate is bound by residues 147-148 (GS), N175, Y286, and E368. N175 is a Mg(2+) binding site.

Belongs to the transketolase family. DXPS subfamily. As to quaternary structure, homodimer. Mg(2+) serves as cofactor. Requires thiamine diphosphate as cofactor.

It catalyses the reaction D-glyceraldehyde 3-phosphate + pyruvate + H(+) = 1-deoxy-D-xylulose 5-phosphate + CO2. Its pathway is metabolic intermediate biosynthesis; 1-deoxy-D-xylulose 5-phosphate biosynthesis; 1-deoxy-D-xylulose 5-phosphate from D-glyceraldehyde 3-phosphate and pyruvate: step 1/1. In terms of biological role, catalyzes the acyloin condensation reaction between C atoms 2 and 3 of pyruvate and glyceraldehyde 3-phosphate to yield 1-deoxy-D-xylulose-5-phosphate (DXP). In Geobacter metallireducens (strain ATCC 53774 / DSM 7210 / GS-15), this protein is 1-deoxy-D-xylulose-5-phosphate synthase 1.